The sequence spans 313 residues: 4-diphosphocytidyl-2-C-methyl-D-erythritol kinase (313 aa).

K11 is a catalytic residue. 99 to 109 provides a ligand contact to ATP; it reads PVAAGLAGGST. Residue D141 is part of the active site.

The protein belongs to the GHMP kinase family. IspE subfamily.

The enzyme catalyses 4-CDP-2-C-methyl-D-erythritol + ATP = 4-CDP-2-C-methyl-D-erythritol 2-phosphate + ADP + H(+). The protein operates within isoprenoid biosynthesis; isopentenyl diphosphate biosynthesis via DXP pathway; isopentenyl diphosphate from 1-deoxy-D-xylulose 5-phosphate: step 3/6. In terms of biological role, catalyzes the phosphorylation of the position 2 hydroxy group of 4-diphosphocytidyl-2C-methyl-D-erythritol. This is 4-diphosphocytidyl-2-C-methyl-D-erythritol kinase from Microcystis aeruginosa (strain NIES-843 / IAM M-2473).